Reading from the N-terminus, the 253-residue chain is Ubiquinone biosynthesis O-methyltransferase (253 aa).

Residues R41, G72, D93, and M136 each contribute to the S-adenosyl-L-methionine site.

This sequence belongs to the methyltransferase superfamily. UbiG/COQ3 family.

It carries out the reaction a 3-demethylubiquinol + S-adenosyl-L-methionine = a ubiquinol + S-adenosyl-L-homocysteine + H(+). It catalyses the reaction a 3-(all-trans-polyprenyl)benzene-1,2-diol + S-adenosyl-L-methionine = a 2-methoxy-6-(all-trans-polyprenyl)phenol + S-adenosyl-L-homocysteine + H(+). It participates in cofactor biosynthesis; ubiquinone biosynthesis. Its function is as follows. O-methyltransferase that catalyzes the 2 O-methylation steps in the ubiquinone biosynthetic pathway. The sequence is that of Ubiquinone biosynthesis O-methyltransferase from Chelativorans sp. (strain BNC1).